Reading from the N-terminus, the 379-residue chain is MQSFLTLLKEHEDTCAPPAELVTLAGRLCRDFQDDLAQLQPLVTAILDSQLRLHLLDNADVALACARVLDQQEQQQAACRLLEGCQVPGGSQELVQLWNDIHYRLVMRRLGVAALTPVQKFRCRKRNPPPPSLCPEGLKSRNFPREVREKLHNFAVGVNTNPSKAERENLALETSLTPEQVYNWFANYRRRQRALPQHMKPAQQATAEDPGARERGPDLLQPSGNPRVDSGFVDRPQWSEEREEKGPPQSPQTTQGPWEPLALAPDFPADETVSKPLDVSGHPQSVQLEEGLGTSSGRTELRVGSFLVTQPPLQAPEFILTQSPPELAPAPSAFPGPVSAMELSQALPSSQVQCSDSQASGDAFWGARMLLEFSGSSLG.

Positions 135 to 196 (PEGLKSRNFP…NYRRRQRALP (62 aa)) form a DNA-binding region, homeobox. The tract at residues 195–283 (LPQHMKPAQQ…SKPLDVSGHP (89 aa)) is disordered. Basic and acidic residues predominate over residues 237 to 246 (QWSEEREEKG).

It localises to the nucleus. In Homo sapiens (Human), this protein is Anomalous homeobox protein (ANHX).